A 433-amino-acid chain; its full sequence is ATP-sensitive inward rectifier potassium channel 12 (433 aa).

At 1–77 (MTAASRANPY…LADMFTTCVD (77 aa)) the chain is on the cytoplasmic side. Cysteine 75 carries the post-translational modification S-nitrosocysteine. A helical membrane pass occupies residues 78–104 (IRWRYMLLIFSLAFLASWLLFGIIFWV). A 1,2-diacyl-sn-glycero-3-phospho-(1D-myo-inositol-4,5-bisphosphate) is bound by residues arginine 79 and arginine 81. The Extracellular portion of the chain corresponds to 105–129 (IAVAHGDLEPAEGRGRTPCVMQVHG). An intrachain disulfide couples cysteine 123 to cysteine 155. Positions 130–146 (FMAAFLFSIETQTTIGY) form an intramembrane region, helical; Pore-forming. 4 residues coordinate K(+): threonine 143, isoleucine 144, glycine 145, and tyrosine 146. The Selectivity filter signature appears at 143 to 148 (TIGYGL). Topologically, residues 147-155 (GLRCVTEEC) are extracellular. A helical transmembrane segment spans residues 156–183 (PVAVFMVVAQSIVGCIIDSFMIGAIMAK). Residues lysine 183 and lysine 188 each coordinate a 1,2-diacyl-sn-glycero-3-phospho-(1D-myo-inositol-4,5-bisphosphate). The Cytoplasmic portion of the chain corresponds to 184–433 (MARPKKRAQT…QRPYRRESEI (250 aa)). Residues 387–433 (DEEDEADGDQDGRSRDGLSPQARHDFDRLQAGGGVLEQRPYRRESEI) form a disordered region. The segment covering 396-414 (QDGRSRDGLSPQARHDFDR) has biased composition (basic and acidic residues). The PDZ-binding motif lies at 431–433 (SEI).

Belongs to the inward rectifier-type potassium channel (TC 1.A.2.1) family. KCNJ12 subfamily. As to quaternary structure, homotetramer. Forms heteromer with KCNJ4. Can form heteromeric channels with Kir2.6/KCNJ18. Association, via its PDZ-recognition domain, with LIN7A, LIN7B, LIN7C, DLG1, CASK and APBA1 plays a key role in its localization and trafficking.

It is found in the membrane. It localises to the cell membrane. Its subcellular location is the sarcolemma. The protein resides in the T-tubule. It carries out the reaction K(+)(in) = K(+)(out). Its activity is regulated as follows. Activated by phosphatidylinositol 4,5-biphosphate (PtdIns(4,5)P2). PtdIns(4,5)P2 binding to the cytoplasmic side of the channel triggers a conformation change leading to channel opening. Inhibited by Ba(2+). Inward rectifying potassium channel that probably participates in controlling the resting membrane potential in electrically excitable cells. Probably participates in establishing action potential waveform and excitability of neuronal and muscle tissues. Inward rectifier potassium channels are characterized by a greater tendency to allow potassium to flow into the cell rather than out of it. Their voltage dependence is regulated by the concentration of extracellular potassium; as external potassium is raised, the voltage range of the channel opening shifts to more positive voltages. The inward rectification is mainly due to the blockage of outward current by internal magnesium. In Homo sapiens (Human), this protein is ATP-sensitive inward rectifier potassium channel 12 (KCNJ12).